A 1129-amino-acid chain; its full sequence is Protein LANA1 (1129 aa).

Disordered stretches follow at residues Met-1 to Tyr-988 and Leu-1110 to Thr-1129. Basic and acidic residues-rich tracts occupy residues Arg-28–Leu-41 and Val-48–Gly-58. The span at Pro-85–Leu-104 shows a compositional bias: pro residues. Residues Ser-139 to Asp-156 show a composition bias toward polar residues. Residues Met-161–Lys-185 show a composition bias toward pro residues. Residues Ser-186 to Arg-197 are compositionally biased toward low complexity. The segment covering Pro-207–Cys-217 has biased composition (polar residues). Residues Pro-263–Ser-275 show a composition bias toward low complexity. Composition is skewed to basic and acidic residues over residues Glu-292 to Ser-301 and Glu-314 to Lys-323. Over residues Asp-324–Gly-419 the composition is skewed to acidic residues. The segment covering Gln-431–Pro-471 has biased composition (low complexity). Positions Gln-472–Gln-528 are enriched in basic and acidic residues. Low complexity predominate over residues Arg-529–Glu-596. Residues Gln-597–Glu-888 are compositionally biased toward acidic residues. Polar residues predominate over residues Thr-924–Gly-934. Over residues Pro-962 to Pro-979 the composition is skewed to basic residues. The interval Phe-1008–Thr-1129 is DNA-binding domain.

As to quaternary structure, homooligomer. Interacts with host BRD2. Interacts with host RELA, ELOB, ELOC and CUL5; these interactions induce the proteasomal degradation of host RELA. Interacts with host TRIM28 and NFE2L2/NRF2; these interactions are essential for the shutdown of lytic gene expression during the early stage of infection. Interacts (via N-terminus) with host histones H2A and H2B; these interactions are essential to dock LANA1 onto chromosomes. Interacts with host BUB1 and PCNA. Interacts with host NAP1L1; this interaction is required for LANA1-dependent DNA replication. Interacts with components of the host MLL1 complex KMT2A and WDR5.

Its subcellular location is the host nucleus. In terms of biological role, multifunctional protein that plays a role in the replication and long-term persistence of the viral episomal genome in dividing cells. Binds to mitotic chromosomes via its N-terminal region and to a 16-bp imperfect palindrome within the origin of replication (oriP) located in the viral terminal repeat (TR) through its C-terminal. Tethers viral episomes to chromosomes during mitosis. Plays a critical role in the shutdown of lytic gene expression during the early stage of infection by interacting with host TRIM28. Also plays a role in the repression of host NF-kappa-B activity upon TNF-alpha stimulation by promoting the proteasomal degradation of host RELA. Promotes nuclear localization and cleavage of host STAT6 leading to constitutive activation of the IL13/STAT6 signaling pathway to promote viral latency. Interacts with and modulates the histone methyltransferase MLL1 complex activity, leading to its recruitment on viral DNA terminal repeats changing the dynamic of histone H3 methylated 'Lys-4'(H3K4me) profile during the initial hours following infection. This Homo sapiens (Human) protein is Protein LANA1 (LANA1).